The sequence spans 466 residues: Argininosuccinate lyase (466 aa).

The 2-(N(omega)-L-arginino)succinate site is built by Ser27, Asn114, and Thr159. The Proton acceptor role is filled by His160. Ser281 acts as the Proton donor in catalysis. 2-(N(omega)-L-arginino)succinate is bound by residues Asn289, Tyr321, Gln326, and Lys329.

This sequence belongs to the lyase 1 family. Argininosuccinate lyase subfamily. As to quaternary structure, homotetramer. In terms of processing, the N-terminus is blocked. Eye lens.

The enzyme catalyses 2-(N(omega)-L-arginino)succinate = fumarate + L-arginine. It participates in amino-acid biosynthesis; L-arginine biosynthesis; L-arginine from L-ornithine and carbamoyl phosphate: step 3/3. In terms of biological role, delta crystallin, the principal crystallin in embryonic lens, is found only in birds and reptiles. This protein also functions as an enzymatically active argininosuccinate lyase, but it has a low activity. This chain is Argininosuccinate lyase (ASL), found in Columba livia (Rock dove).